The sequence spans 204 residues: MTKYTFKPKDFKAFNVEGLDARMEAVNEYIRPQLHELGEYFSDFFTSQTGETFYPHVAKHARRSVNPPKDTWVAFATSKRGYKMLPHFQIGMFEDQLFVMFGIMHEAKDKATRAKVFERKFKAIQQLPDDYRVCLDHMKPDKPFIKDLTDDDLKEAIQRAINVKKGEFFIARAITPQDKRLKSDKAFIAFLEETFDQFLPFYSA.

It belongs to the UPF0637 family.

This Staphylococcus aureus (strain MRSA252) protein is UPF0637 protein SAR1080.